The following is a 216-amino-acid chain: Ion-translocating oxidoreductase complex subunit G (216 aa).

The helical transmembrane segment at Ala-14 to Ile-34 threads the bilayer. FMN phosphoryl threonine is present on Thr-181.

Belongs to the RnfG family. As to quaternary structure, the complex is composed of six subunits: RnfA, RnfB, RnfC, RnfD, RnfE and RnfG. The cofactor is FMN.

It is found in the cell inner membrane. Functionally, part of a membrane-bound complex that couples electron transfer with translocation of ions across the membrane. The chain is Ion-translocating oxidoreductase complex subunit G from Buchnera aphidicola subsp. Baizongia pistaciae (strain Bp).